A 262-amino-acid polypeptide reads, in one-letter code: MILDDIVGVKKKELEIRKESKPLKDIVDELSRIDEFKIRNFKGALINDDISIIGEIKRASPSKGIIDRKFEFEDICSTYETLDIDAVSVLTEQHYFKGKDEYLKKAKEFISKPVLRKDFIVDEYQVYESKLLGADAVLLIVRILKENLDKFYKIASSIGLQCIVEVHNKSELDIALKIEPEIIGINNRNLENFTVDLKNTENLINYMPENTAVISESGIKTSMDFKYIKSLPINGVLIGEGLMKKIYDIESIKKFIDSVKSG.

It belongs to the TrpC family.

It catalyses the reaction 1-(2-carboxyphenylamino)-1-deoxy-D-ribulose 5-phosphate + H(+) = (1S,2R)-1-C-(indol-3-yl)glycerol 3-phosphate + CO2 + H2O. The protein operates within amino-acid biosynthesis; L-tryptophan biosynthesis; L-tryptophan from chorismate: step 4/5. This chain is Indole-3-glycerol phosphate synthase, found in Clostridium kluyveri (strain NBRC 12016).